A 321-amino-acid chain; its full sequence is Ferredoxin--NADP reductase (321 aa).

FAD contacts are provided by E33, Q41, Y46, V86, L119, D277, and S318.

This sequence belongs to the ferredoxin--NADP reductase type 2 family. In terms of assembly, homodimer. The cofactor is FAD.

It carries out the reaction 2 reduced [2Fe-2S]-[ferredoxin] + NADP(+) + H(+) = 2 oxidized [2Fe-2S]-[ferredoxin] + NADPH. This chain is Ferredoxin--NADP reductase, found in Lactococcus lactis subsp. lactis (strain IL1403) (Streptococcus lactis).